We begin with the raw amino-acid sequence, 166 residues long: MRKVKSARKLGRTASHRKATLANLSTQLLLYKRIETTEAKAKETRKYVEKIITKAKGGTVHAQRIIFKKIRDKAAIRELFEDIVGKVADRNGGYTRVIKLAPRYGDAAKMAVIELVDYHEAPESAPVKAKQDRSKRVRGSKKTQEGSEKAEVSASAGEAAAVTEEK.

A disordered region spans residues 122–166; that stretch reads PESAPVKAKQDRSKRVRGSKKTQEGSEKAEVSASAGEAAAVTEEK. Positions 142 to 151 are enriched in basic and acidic residues; that stretch reads KTQEGSEKAE. Over residues 152-166 the composition is skewed to low complexity; that stretch reads VSASAGEAAAVTEEK.

The protein belongs to the bacterial ribosomal protein bL17 family. As to quaternary structure, part of the 50S ribosomal subunit. Contacts protein L32.

The sequence is that of Large ribosomal subunit protein bL17 from Chlorobium phaeobacteroides (strain BS1).